Consider the following 1482-residue polypeptide: Chromosome partition protein MukB (1482 aa).

34-41 contributes to the ATP binding site; that stretch reads GGNGAGKS. Coiled-coil stretches lie at residues 337–468, 509–604, 780–805, 835–1044, 1070–1115, and 1210–1265; these read LNLV…LSVA, QHLA…APIW, RAAR…ATLS, EAEI…ELVD, TNRA…TAKA, and EAIE…LQAV. The tract at residues 666–783 is flexible hinge; it reads PGGAEDQRLV…AVPLFGRAAR (118 aa).

The protein belongs to the SMC family. MukB subfamily. As to quaternary structure, homodimerization via its hinge domain. Binds to DNA via its C-terminal region. Interacts, and probably forms a ternary complex, with MukE and MukF via its C-terminal region. The complex formation is stimulated by calcium or magnesium. Interacts with tubulin-related protein FtsZ.

The protein localises to the cytoplasm. The protein resides in the nucleoid. In terms of biological role, plays a central role in chromosome condensation, segregation and cell cycle progression. Functions as a homodimer, which is essential for chromosome partition. Involved in negative DNA supercoiling in vivo, and by this means organize and compact chromosomes. May achieve or facilitate chromosome segregation by condensation DNA from both sides of a centrally located replisome during cell division. The polypeptide is Chromosome partition protein MukB (Serratia proteamaculans (strain 568)).